A 197-amino-acid chain; its full sequence is TLE family member 5 (197 aa).

A CCN domain region spans residues 166–197; that stretch reads LSALGSQTHLSKEDKNGHDGDTHQEDDGEKSD. A disordered region spans residues 170–197; that stretch reads GSQTHLSKEDKNGHDGDTHQEDDGEKSD. The span at 175–197 shows a compositional bias: basic and acidic residues; sequence LSKEDKNGHDGDTHQEDDGEKSD. Residue serine 196 is modified to Phosphoserine.

This sequence belongs to the WD repeat Groucho/TLE family. Homooligomer and heterooligomer with other family members. Binds TCF7 and the NF-kappa-B subunit RELA. Interacts with PHF12. Interacts (via Q domain) with SIX3. Interacts with SIX6. In terms of processing, ubiquitinated by XIAP/BIRC4. As to expression, ubiquitously expressed in developing embryos by midgestation, a wide expression is conserved in adult. In mouse, abundantly expressed in muscle, heart and brain.

It localises to the nucleus. Transcriptional corepressor. Acts as a dominant repressor towards other family members. Inhibits NF-kappa-B-regulated gene expression. May be required for the initiation and maintenance of the differentiated state. Essential for the transcriptional repressor activity of SIX3 during retina and lens development. This is TLE family member 5 from Mus musculus (Mouse).